Here is a 217-residue protein sequence, read N- to C-terminus: Adenylate kinase (217 aa).

ATP is bound at residue 10–15 (GAGKGT). Residues 30–59 (STGDMLRAAIREGTELGLKAKSVMESGGLV) are NMP. Residues T31, R36, 57 to 59 (GLV), 85 to 88 (GFPR), and Q92 each bind AMP. The segment at 122 to 159 (GRRQHPASGRVYHVVYNPPKVEGKDDETGEDLVQRPDD) is LID. Residues R123 and 132-133 (VY) contribute to the ATP site. 2 residues coordinate AMP: R156 and R167. R202 serves as a coordination point for ATP.

The protein belongs to the adenylate kinase family. As to quaternary structure, monomer.

It is found in the cytoplasm. The catalysed reaction is AMP + ATP = 2 ADP. It participates in purine metabolism; AMP biosynthesis via salvage pathway; AMP from ADP: step 1/1. In terms of biological role, catalyzes the reversible transfer of the terminal phosphate group between ATP and AMP. Plays an important role in cellular energy homeostasis and in adenine nucleotide metabolism. The chain is Adenylate kinase from Acinetobacter baumannii (strain AB307-0294).